The primary structure comprises 185 residues: Ribosome maturation factor RimM (185 aa).

The 76-residue stretch at 108-183 (PGEFHVTDLL…RLEIKTIPGL (76 aa)) folds into the PRC barrel domain.

Belongs to the RimM family. As to quaternary structure, binds ribosomal protein uS19.

It localises to the cytoplasm. An accessory protein needed during the final step in the assembly of 30S ribosomal subunit, possibly for assembly of the head region. Essential for efficient processing of 16S rRNA. May be needed both before and after RbfA during the maturation of 16S rRNA. It has affinity for free ribosomal 30S subunits but not for 70S ribosomes. The chain is Ribosome maturation factor RimM from Synechocystis sp. (strain ATCC 27184 / PCC 6803 / Kazusa).